The primary structure comprises 295 residues: Trimeric intracellular cation channel type A (295 aa).

Residues 1 to 11 (MELLSALSLDD) are Lumenal-facing. The chain crosses the membrane as a helical span at residues 12–32 (LAVAFSKLPVFPLFDVAYYII). The Cytoplasmic portion of the chain corresponds to 33 to 51 (SILYLKYEPGAVDLSKRSP). A helical transmembrane segment spans residues 52–72 (VASWLCAMLYCFGSYILADVL). Residues 73–84 (LGESPIHYFSNN) are Lumenal-facing. Gly-74 provides a ligand contact to Ca(2+). Residues 85 to 105 (ANILLASAVWYLTFFCPLNIF) form a helical membrane-spanning segment. At 106-144 (YKIVSFLPLKLVLVGMKEVVRVRKIAMGIHHAHHHYHHG) the chain is on the cytoplasmic side. Lys-122 and Arg-126 together coordinate a 1,2-diacyl-sn-glycero-3-phospho-(1D-myo-inositol-4,5-bisphosphate). A helical membrane pass occupies residues 145–165 (WVIMVLIGWVKGSGVALMSNL). At 166–178 (EQLLRGVWKPETN) the chain is on the lumenal side. The chain crosses the membrane as a helical span at residues 179–199 (EILHMSFPTKASLYGAILFTL). Residues 200-201 (QQ) are Cytoplasmic-facing. Residues 202–222 (AHWLPISKAYLIFFFTLFMAI) traverse the membrane as a helical segment. Over 223–233 (CKIYMTATHSH) the chain is Lumenal. A helical membrane pass occupies residues 234 to 254 (GSPFAIFESGICCVLFGAANG). Residues 255-295 (DHDDHGDHHHHHDDHDVSHSTVKSKEELNEGTRKRKTKKAE) lie on the Cytoplasmic side of the membrane. Residues 259–286 (HGDHHHHHDDHDVSHSTVKSKEELNEGT) show a composition bias toward basic and acidic residues. The interval 259 to 295 (HGDHHHHHDDHDVSHSTVKSKEELNEGTRKRKTKKAE) is disordered.

This sequence belongs to the TMEM38 family. As to quaternary structure, homotrimer; conformation seems to be controled by binding to diacylglycerol (DAG).

The protein resides in the sarcoplasmic reticulum membrane. It is found in the nucleus membrane. It carries out the reaction K(+)(in) = K(+)(out). Its activity is regulated as follows. Channel activity is activated by a change of voltage within the sarcoplasmic reticulum lumen and blocked by luminal high Ca(2+) levels. In terms of biological role, intracellular monovalent cation channel required for maintenance of rapid intracellular calcium release. Acts as a potassium counter-ion channel that functions in synchronization with calcium release from intracellular stores. Opened by a change of voltage within the sarcoplasmic reticulum lumen. This chain is Trimeric intracellular cation channel type A (tmem38a), found in Xenopus tropicalis (Western clawed frog).